The sequence spans 288 residues: ATP synthase gamma chain (288 aa).

The protein belongs to the ATPase gamma chain family. F-type ATPases have 2 components, CF(1) - the catalytic core - and CF(0) - the membrane proton channel. CF(1) has five subunits: alpha(3), beta(3), gamma(1), delta(1), epsilon(1). CF(0) has three main subunits: a, b and c.

The protein localises to the cell inner membrane. Functionally, produces ATP from ADP in the presence of a proton gradient across the membrane. The gamma chain is believed to be important in regulating ATPase activity and the flow of protons through the CF(0) complex. This chain is ATP synthase gamma chain, found in Blochmanniella floridana.